The primary structure comprises 303 residues: tRNA dimethylallyltransferase (303 aa).

11–18 (GPTGVGKS) contacts ATP. 13–18 (TGVGKS) is a substrate binding site. Interaction with substrate tRNA regions lie at residues 36-39 (DSRQ) and 159-163 (QRVLR).

The protein belongs to the IPP transferase family. Monomer. Mg(2+) serves as cofactor.

The enzyme catalyses adenosine(37) in tRNA + dimethylallyl diphosphate = N(6)-dimethylallyladenosine(37) in tRNA + diphosphate. Its function is as follows. Catalyzes the transfer of a dimethylallyl group onto the adenine at position 37 in tRNAs that read codons beginning with uridine, leading to the formation of N6-(dimethylallyl)adenosine (i(6)A). The sequence is that of tRNA dimethylallyltransferase from Lawsonia intracellularis (strain PHE/MN1-00).